The chain runs to 361 residues: MAGNTIGQLFRVTTFGESHGLALGCIVDGVPPGIPLTEADLQHDLDRRRPGTSRYTTQRREPDQVKILSGVFEGVTTGTSIGLLIENTDQRSQDYSAIKDVFRPGHADYTYEQKYGLRDYRGGGRSSARETAMRVAAGAIAKKYLAEKFGIEIRGCLTQMGDIPLEIKDWSQVEQNPFFCPDPDKIDALDELMRALKKEGDSIGAKVTVVASGVPAGLGEPVFDRLDADIAHALMSINAVKGVEIGDGFDVVALRGSQNRDEITKDGFQSNHAGGILGGISSGQQIIAHMALKPTSSITVPGRTINRFGEEVEMITKGRHDPCVGIRAVPIAEAMLAIVLMDHLLRQRAQNADVKTHIPRW.

Positions 48 and 54 each coordinate NADP(+). Residues 125–127 (RSS), 238–239 (NA), G278, 293–297 (KPTSS), and R319 each bind FMN.

Belongs to the chorismate synthase family. In terms of assembly, homotetramer. It depends on FMNH2 as a cofactor.

It carries out the reaction 5-O-(1-carboxyvinyl)-3-phosphoshikimate = chorismate + phosphate. It functions in the pathway metabolic intermediate biosynthesis; chorismate biosynthesis; chorismate from D-erythrose 4-phosphate and phosphoenolpyruvate: step 7/7. In terms of biological role, catalyzes the anti-1,4-elimination of the C-3 phosphate and the C-6 proR hydrogen from 5-enolpyruvylshikimate-3-phosphate (EPSP) to yield chorismate, which is the branch point compound that serves as the starting substrate for the three terminal pathways of aromatic amino acid biosynthesis. This reaction introduces a second double bond into the aromatic ring system. The polypeptide is Chorismate synthase (Escherichia coli O139:H28 (strain E24377A / ETEC)).